The primary structure comprises 244 residues: Heat shock transcription factor (244 aa).

A DNA-binding region spans residues 13-108 (IPKFIMKLYK…LLGFDDSLRM (96 aa)). The interval 123–168 (DGSLKEIVEYLYVQNQELYTELSVCKERIERQERALNGLIEILSRV) is involved in trimerization. A disordered region spans residues 204–244 (EGCEPASPPLQDKGIPELSFKPGGIPHADSDTKDDNYDPFF). Residues 231 to 244 (ADSDTKDDNYDPFF) are compositionally biased toward basic and acidic residues.

Belongs to the HSF family. As to quaternary structure, homotrimer. Homotrimerization increases the affinity of HSF1 to DNA.

The protein resides in the nucleus. In terms of biological role, DNA-binding transcription factor that specifically binds heat shock promoter elements (HSE) and activates transcription. This Encephalitozoon cuniculi (strain GB-M1) (Microsporidian parasite) protein is Heat shock transcription factor.